Reading from the N-terminus, the 469-residue chain is Maintenance of mitochondrial morphology protein 1 (469 aa).

Over 1-25 the chain is Lumenal; it reads MADEVPTAVPLATPAGSSSLSFTQG. A helical transmembrane segment spans residues 26–46; sequence FLLGQLSIAILIFCFIKFFIF. The Cytoplasmic segment spans residues 47-469; that stretch reads GEPPSADDRA…GMRWRGALPR (423 aa). The SMP-LTD domain occupies 124-363; sequence QPESLDWFNV…EPRFQQIVLP (240 aa). Positions 266–299 are enriched in low complexity; the sequence is SSSPPSTTAPMPSPTSNTHRSSSPSRPASSSGAP. Disordered stretches follow at residues 266-304 and 426-469; these read SSSP…HRPT and EAEG…ALPR. 2 stretches are compositionally biased toward basic and acidic residues: residues 426-439 and 449-462; these read EAEG…EIRA and ERSR…DGMR.

It belongs to the MMM1 family. Homodimer. Component of the ER-mitochondria encounter structure (ERMES) or MDM complex, composed of mmm1, MDM10, MDM12 and MDM34. A mmm1 homodimer associates with one molecule of MDM12 on each side in a pairwise head-to-tail manner, and the SMP-LTD domains of mmm1 and MDM12 generate a continuous hydrophobic tunnel for phospholipid trafficking.

It is found in the endoplasmic reticulum membrane. Its function is as follows. Component of the ERMES/MDM complex, which serves as a molecular tether to connect the endoplasmic reticulum (ER) and mitochondria. Components of this complex are involved in the control of mitochondrial shape and protein biogenesis, and function in nonvesicular lipid trafficking between the ER and mitochondria. The MDM12-mmm1 subcomplex functions in the major beta-barrel assembly pathway that is responsible for biogenesis of all outer membrane beta-barrel proteins, and acts in a late step after the SAM complex. The MDM10-MDM12-mmm1 subcomplex further acts in the TOM40-specific pathway after the action of the MDM12-mmm1 complex. Essential for establishing and maintaining the structure of mitochondria and maintenance of mtDNA nucleoids. In Pyrenophora tritici-repentis (strain Pt-1C-BFP) (Wheat tan spot fungus), this protein is Maintenance of mitochondrial morphology protein 1.